A 500-amino-acid chain; its full sequence is Zinc finger and BTB domain-containing protein 34 (500 aa).

A BTB domain is found at cysteine 32 to leucine 96. The residue at position 164 (serine 164) is a Phosphoserine. Residues serine 164–serine 209 form a disordered region. The span at arginine 193–arginine 202 shows a compositional bias: basic and acidic residues. Residues lysine 235 and lysine 237 each participate in a glycyl lysine isopeptide (Lys-Gly) (interchain with G-Cter in SUMO2) cross-link. Over residues valine 236–serine 245 the composition is skewed to basic and acidic residues. Disordered stretches follow at residues valine 236–glycine 256 and serine 341–serine 360. 2 consecutive C2H2-type zinc fingers follow at residues leucine 372 to histidine 394 and phenylalanine 400 to histidine 422. Residue lysine 426 forms a Glycyl lysine isopeptide (Lys-Gly) (interchain with G-Cter in SUMO2) linkage. Residues phenylalanine 428–histidine 451 form a C2H2-type 3 zinc finger. Phosphoserine is present on serine 463. Residue lysine 474 forms a Glycyl lysine isopeptide (Lys-Gly) (interchain with G-Cter in SUMO2) linkage. The segment at aspartate 478 to aspartate 500 is disordered.

Expressed in several tissues, including heart, brain, thymus, skeletal muscle, small intestine, testis, kidney, placenta, peripheral blood cells and adult and fetal liver.

The protein resides in the nucleus. May be a transcriptional repressor. The polypeptide is Zinc finger and BTB domain-containing protein 34 (ZBTB34) (Homo sapiens (Human)).